The following is a 243-amino-acid chain: Small ribosomal subunit protein eS4 (243 aa).

Residues 37 to 99 (IPLALLLKHY…SDLYFRIVPD (63 aa)) form the S4 RNA-binding domain.

The protein belongs to the eukaryotic ribosomal protein eS4 family.

This Sulfurisphaera tokodaii (strain DSM 16993 / JCM 10545 / NBRC 100140 / 7) (Sulfolobus tokodaii) protein is Small ribosomal subunit protein eS4 (rps4e).